Consider the following 334-residue polypeptide: ADP-L-glycero-D-manno-heptose-6-epimerase (334 aa).

NADP(+) contacts are provided by residues 11–12 (FI), 32–33 (DN), lysine 39, lysine 54, 77–81 (QGACS), and asparagine 94. Tyrosine 141 acts as the Proton acceptor in catalysis. Lysine 145 provides a ligand contact to NADP(+). A substrate-binding site is contributed by asparagine 171. The NADP(+) site is built by valine 172 and lysine 180. Lysine 180 serves as the catalytic Proton acceptor. Residues arginine 182, histidine 189, 203-206 (FGSN), arginine 216, and tyrosine 295 contribute to the substrate site.

This sequence belongs to the NAD(P)-dependent epimerase/dehydratase family. HldD subfamily. In terms of assembly, homopentamer. NADP(+) serves as cofactor.

The enzyme catalyses ADP-D-glycero-beta-D-manno-heptose = ADP-L-glycero-beta-D-manno-heptose. The protein operates within nucleotide-sugar biosynthesis; ADP-L-glycero-beta-D-manno-heptose biosynthesis; ADP-L-glycero-beta-D-manno-heptose from D-glycero-beta-D-manno-heptose 7-phosphate: step 4/4. It participates in bacterial outer membrane biogenesis; LOS core biosynthesis. Catalyzes the interconversion between ADP-D-glycero-beta-D-manno-heptose and ADP-L-glycero-beta-D-manno-heptose via an epimerization at carbon 6 of the heptose. This chain is ADP-L-glycero-D-manno-heptose-6-epimerase, found in Neisseria meningitidis serogroup A / serotype 4A (strain DSM 15465 / Z2491).